The following is a 265-amino-acid chain: Undecaprenyl-diphosphatase (265 aa).

Helical transmembrane passes span 38-58, 75-95, 108-128, 135-155, 181-201, 215-235, and 244-264; these read RSDFFNIVIQAGAILAICLAL, RDYVLKVGVAFLVTAVVGLIV, PVAWALLIGGVWMLVAEHFAG, VVTWKVAIAVGLAQVVAGVFP, FVFMVGIPTMFAASGYALLEM, VAVAFVAATITGFVVVKWLLG, and VFAVYRMLLGAALLLWLPAAA.

Belongs to the UppP family.

Its subcellular location is the cell inner membrane. The catalysed reaction is di-trans,octa-cis-undecaprenyl diphosphate + H2O = di-trans,octa-cis-undecaprenyl phosphate + phosphate + H(+). In terms of biological role, catalyzes the dephosphorylation of undecaprenyl diphosphate (UPP). Confers resistance to bacitracin. This is Undecaprenyl-diphosphatase from Xanthomonas axonopodis pv. citri (strain 306).